The following is a 247-amino-acid chain: Pyridoxine 5'-phosphate synthase (247 aa).

Asparagine 9 is a 3-amino-2-oxopropyl phosphate binding site. 11–12 (DH) serves as a coordination point for 1-deoxy-D-xylulose 5-phosphate. Residue arginine 20 coordinates 3-amino-2-oxopropyl phosphate. Histidine 45 functions as the Proton acceptor in the catalytic mechanism. 1-deoxy-D-xylulose 5-phosphate-binding residues include arginine 47 and histidine 52. The Proton acceptor role is filled by glutamate 72. Residue threonine 102 coordinates 1-deoxy-D-xylulose 5-phosphate. The active-site Proton donor is the histidine 193. 3-amino-2-oxopropyl phosphate contacts are provided by residues glycine 194 and 215 to 216 (GH).

Belongs to the PNP synthase family. Homooctamer; tetramer of dimers.

The protein localises to the cytoplasm. It carries out the reaction 3-amino-2-oxopropyl phosphate + 1-deoxy-D-xylulose 5-phosphate = pyridoxine 5'-phosphate + phosphate + 2 H2O + H(+). It participates in cofactor biosynthesis; pyridoxine 5'-phosphate biosynthesis; pyridoxine 5'-phosphate from D-erythrose 4-phosphate: step 5/5. Catalyzes the complicated ring closure reaction between the two acyclic compounds 1-deoxy-D-xylulose-5-phosphate (DXP) and 3-amino-2-oxopropyl phosphate (1-amino-acetone-3-phosphate or AAP) to form pyridoxine 5'-phosphate (PNP) and inorganic phosphate. The polypeptide is Pyridoxine 5'-phosphate synthase (Blochmanniella floridana).